Reading from the N-terminus, the 341-residue chain is Dihydroorotate dehydrogenase (quinone) (341 aa).

FMN is bound by residues 61–65 (AGLDK) and threonine 85. Residue lysine 65 coordinates substrate. 110 to 114 (NRMGF) is a binding site for substrate. Residues asparagine 138 and asparagine 171 each coordinate FMN. A substrate-binding site is contributed by asparagine 171. Serine 174 acts as the Nucleophile in catalysis. Residue asparagine 176 participates in substrate binding. Lysine 216 and threonine 244 together coordinate FMN. 245–246 (NT) contacts substrate. FMN is bound by residues glycine 267, glycine 296, and 317 to 318 (YS).

This sequence belongs to the dihydroorotate dehydrogenase family. Type 2 subfamily. Monomer. FMN serves as cofactor.

It localises to the cell membrane. The catalysed reaction is (S)-dihydroorotate + a quinone = orotate + a quinol. It participates in pyrimidine metabolism; UMP biosynthesis via de novo pathway; orotate from (S)-dihydroorotate (quinone route): step 1/1. Catalyzes the conversion of dihydroorotate to orotate with quinone as electron acceptor. This Pseudomonas putida (strain GB-1) protein is Dihydroorotate dehydrogenase (quinone).